The following is a 126-amino-acid chain: MKFSRDVTSSRRKQRKAHFGAPSSVRRVLMSAPLSKELREQYKIRSLPVRRDDQITVIRGSNKGREGKITSVYRKKFLLLIERVTREKANGASAPVGIDASKVVITKLHLDKDRKDLIVRKGGKVE.

Residues M1–S23 form a disordered region.

The protein belongs to the universal ribosomal protein uL24 family. In terms of assembly, component of the large ribosomal subunit (LSU). Mature yeast ribosomes consist of a small (40S) and a large (60S) subunit. The 40S small subunit contains 1 molecule of ribosomal RNA (18S rRNA) and at least 33 different proteins. The large 60S subunit contains 3 rRNA molecules (25S, 5.8S and 5S rRNA) and at least 46 different proteins.

The protein resides in the cytoplasm. The protein localises to the nucleus. It is found in the nucleolus. Component of the ribosome, a large ribonucleoprotein complex responsible for the synthesis of proteins in the cell. The small ribosomal subunit (SSU) binds messenger RNAs (mRNAs) and translates the encoded message by selecting cognate aminoacyl-transfer RNA (tRNA) molecules. The large subunit (LSU) contains the ribosomal catalytic site termed the peptidyl transferase center (PTC), which catalyzes the formation of peptide bonds, thereby polymerizing the amino acids delivered by tRNAs into a polypeptide chain. The nascent polypeptides leave the ribosome through a tunnel in the LSU and interact with protein factors that function in enzymatic processing, targeting, and the membrane insertion of nascent chains at the exit of the ribosomal tunnel. The polypeptide is Large ribosomal subunit protein uL24 (rpl26) (Schizosaccharomyces pombe (strain 972 / ATCC 24843) (Fission yeast)).